Reading from the N-terminus, the 419-residue chain is UDP-N-acetylglucosamine 1-carboxyvinyltransferase (419 aa).

22-23 is a phosphoenolpyruvate binding site; the sequence is KN. Residue R92 participates in UDP-N-acetyl-alpha-D-glucosamine binding. C116 functions as the Proton donor in the catalytic mechanism. C116 carries the post-translational modification 2-(S-cysteinyl)pyruvic acid O-phosphothioketal. Residues 121 to 125, D306, and I328 each bind UDP-N-acetyl-alpha-D-glucosamine; that span reads RPIDL.

It belongs to the EPSP synthase family. MurA subfamily.

It localises to the cytoplasm. The catalysed reaction is phosphoenolpyruvate + UDP-N-acetyl-alpha-D-glucosamine = UDP-N-acetyl-3-O-(1-carboxyvinyl)-alpha-D-glucosamine + phosphate. The protein operates within cell wall biogenesis; peptidoglycan biosynthesis. In terms of biological role, cell wall formation. Adds enolpyruvyl to UDP-N-acetylglucosamine. Target for the antibiotic fosfomycin. Involved in heteroresistance to antibiotic fosfomycin. Heteroresistance is the ability of a clonal population to grow one or several subpopulations at a frequency of 10(-7) to 10(-3) in the presence of a higher antibiotic concentration than that predicted to be effective by measurement of the minimum inhibitory concentration (MIC). This Streptococcus pneumoniae serotype 2 (strain D39 / NCTC 7466) protein is UDP-N-acetylglucosamine 1-carboxyvinyltransferase.